The chain runs to 202 residues: Small ribosomal subunit protein uS4 (202 aa).

The disordered stretch occupies residues 22–43 (TRKSARRAYPPGQHGQNRKKRS). The S4 RNA-binding domain occupies 90 to 152 (MRLDNTVFRL…APSRKLVENN (63 aa)).

The protein belongs to the universal ribosomal protein uS4 family. Part of the 30S ribosomal subunit. Contacts protein S5. The interaction surface between S4 and S5 is involved in control of translational fidelity.

Functionally, one of the primary rRNA binding proteins, it binds directly to 16S rRNA where it nucleates assembly of the body of the 30S subunit. In terms of biological role, with S5 and S12 plays an important role in translational accuracy. This Trichormus variabilis (strain ATCC 29413 / PCC 7937) (Anabaena variabilis) protein is Small ribosomal subunit protein uS4.